We begin with the raw amino-acid sequence, 4427 residues long: Dynein axonemal heavy chain 2 (4427 aa).

Residues 1–73 (MSSKAEKKQR…AQSEESVEPE (73 aa)) form a disordered region. Positions 1–1764 (MSSKAEKKQR…VIRQTNTQFQ (1764 aa)) are stem. The segment covering 14–23 (RGSSQASWSG) has biased composition (polar residues). Positions 50 to 59 (LPKEEPEPRL) are enriched in basic and acidic residues. Residues 1404 to 1439 (EDNQVALSTMKASRFVKAFEKDVDHWERCLSLILEV) form a TPR 1 repeat. 4 AAA regions span residues 1765 to 1986 (YNYE…LLRY), 2046 to 2273 (ETVE…DNCK), 2378 to 2625 (RYPP…VFQG), and 2722 to 2974 (EYNL…LRRH). Residues 1803 to 1810 (GPAGTGKT), 2084 to 2091 (GCTGSGKT), and 2416 to 2423 (GPVGTGKT) contribute to the ATP site. One copy of the TPR 2 repeat lies at 2721–2754 (NEYNLSPSVVPMQLVLFREAIEHITRIVRVIGQP). 2762 to 2769 (GIGGSGRQ) contacts ATP. A stalk region spans residues 2989–3272 (YKKLLGEKRQ…EELRKKSEEM (284 aa)). The stretch at 3012–3049 (FKIDETREKVQVMSLELEDAKKKVAEFQKQCEEYLVII) forms a coiled coil. A TPR 3 repeat occupies 3072–3105 (VEEIKCQALADNAQKDLEEALPALEEAMRALESL). Coiled-coil stretches lie at residues 3216–3304 (KRIR…EEDL) and 3523–3567 (VRKE…GSLL). AAA stretches follow at residues 3358–3588 (LCNP…EVTE) and 3804–4023 (VTSF…LLSL). 2 TPR repeats span residues 4072–4104 (STPF…LLPG) and 4105–4140 (MDPP…QPQI).

Belongs to the dynein heavy chain family. As to quaternary structure, part of the axonemal inner dynein arm complex that consists of at least two heavy chains and a number of intermediate and light chains. Interacts with DNAI4. Expressed primarily in trachea and testis, 2 tissues containing axonemal structures. Also expressed in lung. Expressed in spermatozoa (at protein level).

Its subcellular location is the cytoplasm. The protein resides in the cytoskeleton. It localises to the cilium axoneme. It is found in the flagellum axoneme. As part of the axonemal inner dynein arm complex plays a central role in ciliary beat. Expressed in sperm flagellum, it is required for sperm motility. Dyneins are microtubule-based molecular motors possessing ATPase activities that can convert the chemical energy of ATP into relative sliding between adjacent microtubule doublets to generate ciliary bending. This is Dynein axonemal heavy chain 2 from Homo sapiens (Human).